The sequence spans 498 residues: Archaemetzincin-1 (498 aa).

His261 contacts Zn(2+). Glu262 serves as the catalytic Proton acceptor. Residues His265, Cys272, Cys277, Cys296, and Cys299 each coordinate Zn(2+). Residues 332-381 (QEAGEPSVWEDTPPASADSGMCCESDSEPGTSVSEPLTPDAGSHTFASGP) are disordered.

It belongs to the peptidase M54 family. The cofactor is Zn(2+).

Probable zinc metalloprotease. In Homo sapiens (Human), this protein is Archaemetzincin-1 (AMZ1).